We begin with the raw amino-acid sequence, 187 residues long: Peptidyl-tRNA hydrolase (187 aa).

TRNA is bound at residue phenylalanine 14. The active-site Proton acceptor is histidine 19. Residues tyrosine 64, asparagine 66, and asparagine 112 each coordinate tRNA.

Belongs to the PTH family. As to quaternary structure, monomer.

The protein resides in the cytoplasm. The catalysed reaction is an N-acyl-L-alpha-aminoacyl-tRNA + H2O = an N-acyl-L-amino acid + a tRNA + H(+). Functionally, hydrolyzes ribosome-free peptidyl-tRNAs (with 1 or more amino acids incorporated), which drop off the ribosome during protein synthesis, or as a result of ribosome stalling. Its function is as follows. Catalyzes the release of premature peptidyl moieties from peptidyl-tRNA molecules trapped in stalled 50S ribosomal subunits, and thus maintains levels of free tRNAs and 50S ribosomes. The polypeptide is Peptidyl-tRNA hydrolase (Oceanobacillus iheyensis (strain DSM 14371 / CIP 107618 / JCM 11309 / KCTC 3954 / HTE831)).